Reading from the N-terminus, the 635-residue chain is 1-deoxy-D-xylulose-5-phosphate synthase (635 aa).

Residues His-72 and 113 to 115 (GHA) contribute to the thiamine diphosphate site. Mg(2+) is bound at residue Asp-144. Thiamine diphosphate contacts are provided by residues 145–146 (GA), Asn-174, Tyr-287, and Glu-370. Asn-174 is a Mg(2+) binding site.

The protein belongs to the transketolase family. DXPS subfamily. As to quaternary structure, homodimer. Mg(2+) serves as cofactor. Requires thiamine diphosphate as cofactor.

It carries out the reaction D-glyceraldehyde 3-phosphate + pyruvate + H(+) = 1-deoxy-D-xylulose 5-phosphate + CO2. It participates in metabolic intermediate biosynthesis; 1-deoxy-D-xylulose 5-phosphate biosynthesis; 1-deoxy-D-xylulose 5-phosphate from D-glyceraldehyde 3-phosphate and pyruvate: step 1/1. In terms of biological role, catalyzes the acyloin condensation reaction between C atoms 2 and 3 of pyruvate and glyceraldehyde 3-phosphate to yield 1-deoxy-D-xylulose-5-phosphate (DXP). The sequence is that of 1-deoxy-D-xylulose-5-phosphate synthase from Trichodesmium erythraeum (strain IMS101).